The chain runs to 362 residues: Protein MGF 360-19R (362 aa).

An ANK repeat occupies 66-98; it reads LLNTALMKAVQDNNYELIKLFTEWGANINYGLI.

This sequence belongs to the asfivirus MGF 360 family.

In terms of biological role, plays a role in virus cell tropism, and may be required for efficient virus replication in macrophages. The sequence is that of Protein MGF 360-19R from Ornithodoros (relapsing fever ticks).